The chain runs to 479 residues: Something about silencing protein 10 (479 aa).

Residues 1-10 are compositionally biased toward basic residues; sequence MVGRSRRRGA. Disordered regions lie at residues 1 to 45 and 62 to 166; these read MVGR…SYYQ and KGWN…EEAQ. R8 is subject to Omega-N-methylarginine. Over residues 11–21 the composition is skewed to low complexity; it reads AKWAAVRAKAG. Position 37 is a phosphoserine (S37). Residues 69 to 111 are compositionally biased toward acidic residues; the sequence is SGDEEDGEEEEEEVLALDMDDEDDEDGGNAGEEEEEENADDDG. K144 bears the N6-acetyllysine; alternate mark. Residue K144 forms a Glycyl lysine isopeptide (Lys-Gly) (interchain with G-Cter in SUMO2); alternate linkage. A Phosphoserine modification is found at S150. Over residues 153–165 the composition is skewed to acidic residues; that stretch reads EAEEEEREEEEEA. Position 362 is a phosphothreonine (T362). Phosphoserine occurs at positions 365 and 368. Position 385 is a citrulline (R385). The segment at 419–466 is disordered; that stretch reads RGLTPRRKKIDRNPRVKHREKFRRAKIRRRGQVREVRKEEQRYSGELS. The segment covering 422–449 has biased composition (basic residues); the sequence is TPRRKKIDRNPRVKHREKFRRAKIRRRG. Residues 450 to 461 show a composition bias toward basic and acidic residues; the sequence is QVREVRKEEQRY.

It belongs to the SAS10 family. As to quaternary structure, part of the small subunit (SSU) processome, composed of more than 70 proteins and the RNA chaperone small nucleolar RNA (snoRNA) U3. In terms of processing, citrullinated by PADI4.

It is found in the nucleus. The protein resides in the nucleolus. Functionally, essential for gene silencing: has a role in the structure of silenced chromatin. Plays a role in the developing brain. Part of the small subunit (SSU) processome, first precursor of the small eukaryotic ribosomal subunit. During the assembly of the SSU processome in the nucleolus, many ribosome biogenesis factors, an RNA chaperone and ribosomal proteins associate with the nascent pre-rRNA and work in concert to generate RNA folding, modifications, rearrangements and cleavage as well as targeted degradation of pre-ribosomal RNA by the RNA exosome. This is Something about silencing protein 10 from Homo sapiens (Human).